The following is a 237-amino-acid chain: Ribosomal RNA small subunit methyltransferase G (237 aa).

S-adenosyl-L-methionine contacts are provided by residues Gly-78, Phe-83, Ala-129–Glu-130, and Arg-148.

It belongs to the methyltransferase superfamily. RNA methyltransferase RsmG family.

The protein localises to the cytoplasm. Functionally, specifically methylates the N7 position of a guanine in 16S rRNA. This chain is Ribosomal RNA small subunit methyltransferase G, found in Streptococcus equi subsp. zooepidemicus (strain MGCS10565).